The following is an 82-amino-acid chain: Cytochrome b559 subunit alpha (82 aa).

A helical membrane pass occupies residues 22-36 (VIHAVTLPSIFLAGY). H24 contacts heme.

The protein belongs to the PsbE/PsbF family. Heterodimer of an alpha subunit and a beta subunit. PSII is composed of 1 copy each of membrane proteins PsbA, PsbB, PsbC, PsbD, PsbE, PsbF, PsbH, PsbI, PsbJ, PsbK, PsbL, PsbM, PsbT, PsbX, PsbY, Psb30/Ycf12, peripheral proteins PsbO, CyanoQ (PsbQ), PsbU, PsbV and a large number of cofactors. It forms dimeric complexes. The cofactor is heme b.

It is found in the cellular thylakoid membrane. In terms of biological role, this b-type cytochrome is tightly associated with the reaction center of photosystem II (PSII). PSII is a light-driven water:plastoquinone oxidoreductase that uses light energy to abstract electrons from H(2)O, generating O(2) and a proton gradient subsequently used for ATP formation. It consists of a core antenna complex that captures photons, and an electron transfer chain that converts photonic excitation into a charge separation. In Prochlorococcus marinus (strain MIT 9303), this protein is Cytochrome b559 subunit alpha.